The primary structure comprises 775 residues: GRIP and coiled-coil domain-containing protein 1 (775 aa).

Residues 13-61 (SKKDLLETIETQKKQLLQYQARLKDVVRAYKSLLKEKEALEASIKVLSV) are a coiled coil. Positions 84–93 (DDRCSTHSED) are enriched in basic and acidic residues. Disordered regions lie at residues 84 to 153 (DDRC…AGGE) and 614 to 639 (GLPGRRSPVGGGGPGDPADTSSSDSL). Low complexity-rich tracts occupy residues 94–110 (STGTATSLDTAASLTST), 133–147 (ASWSESGVSSSSGDG), and 629–638 (DPADTSSSDS). Residues 153-763 (EVDKRLHQLK…PEEKQVIMRL (611 aa)) adopt a coiled-coil conformation. Positions 713-763 (QSREGANLEYLKNIIYRFLTLPDSLGRQQTLTAILTILHFSPEEKQVIMRL) constitute a GRIP domain.

The protein localises to the cytoplasm. It localises to the golgi apparatus membrane. Probably involved in maintaining Golgi structure. The polypeptide is GRIP and coiled-coil domain-containing protein 1 (GCC1) (Homo sapiens (Human)).